The chain runs to 351 residues: Cyanuric acid amidohydrolase (351 aa).

Positions 1–96 (MPSLRAHVFR…HWTVFARETV (96 aa)) are RU A. Substrate contacts are provided by residues arginine 53 and 77 to 78 (SG). An RU B region spans residues 103-240 (ALAIGVSRTP…HEIIVLGMSA (138 aa)). Lysine 153 is a catalytic residue. Substrate contacts are provided by residues arginine 185 and 223 to 224 (SS). Serine 223 (nucleophile) is an active-site residue. The RU C stretch occupies residues 246 to 351 (LSIDHAVMLD…PVAIIVEKEQ (106 aa)). Mg(2+) is bound at residue glutamate 283. Substrate-binding positions include arginine 310 and 329-330 (SG). Residues alanine 332, glutamine 335, glycine 336, proline 337, and glycine 340 each coordinate Mg(2+).

This sequence belongs to the cyclic amide hydrolase (CyAH) family. Homotetramer.

The enzyme catalyses cyanurate + H2O = 1-carboxybiuret + H(+). It functions in the pathway xenobiotic degradation; atrazine degradation; biuret from cyanurate: step 1/1. With respect to regulation, inhibited by barbituric acid. Functionally, responsible for the hydrolysis of cyanuric acid, an intermediate formed during catabolism of s-triazine based compounds in herbicides such as atrazine and polymers such as melamine. Catalyzes the hydrolytic opening of the s-triazine ring of cyanuric acid (2,4,6-trihydroxy-s-triazine) to yield carbon dioxide and carboxybiuret, which spontaneously decarboxylates to biuret. The sequence is that of Cyanuric acid amidohydrolase from Rhizobium leguminosarum bv. trifolii (strain WSM1325).